Reading from the N-terminus, the 436-residue chain is GTPase Obg (436 aa).

The Obg domain occupies 2 to 160 (SMFLDTAKIQ…RELLLELKVL (159 aa)). The region spanning 161-338 (ADVGLVGFPS…LLDATAELLD (178 aa)) is the OBG-type G domain. GTP contacts are provided by residues 167–174 (GFPSVGKS), 192–196 (FTTIV), 214–217 (DLPG), 284–287 (NKMD), and 319–321 (SSL). Mg(2+)-binding residues include serine 174 and threonine 194. Positions 358–436 (GFDEEAPAFE…IGKFEFEFVD (79 aa)) constitute an OCT domain.

This sequence belongs to the TRAFAC class OBG-HflX-like GTPase superfamily. OBG GTPase family. In terms of assembly, monomer. The cofactor is Mg(2+).

It is found in the cytoplasm. An essential GTPase which binds GTP, GDP and possibly (p)ppGpp with moderate affinity, with high nucleotide exchange rates and a fairly low GTP hydrolysis rate. Plays a role in control of the cell cycle, stress response, ribosome biogenesis and in those bacteria that undergo differentiation, in morphogenesis control. In Streptococcus gordonii (strain Challis / ATCC 35105 / BCRC 15272 / CH1 / DL1 / V288), this protein is GTPase Obg.